A 239-amino-acid chain; its full sequence is MKIDILTLFPDMFAPLEYSIVGKAKDKGILEINYHNFRDNAEKARHVDDEPYGGGQGMLLRAQPIFDTFDKLNVTKPRVILLDPAGRTFNQAYAEELAQEEELVFICGHYEGYDERTKTLVTDEISLGDFVLTGGELAAMTIVDATVRLIPEVLGKEASHKDDSFSSGLLEFPQYTRPAEFRGMKVPDVLLSGHHVNIRRWRMEQSLRKTWERRPDLLENYDFTDEERQILEEIKSEGK.

Residues glycine 108 and 127-132 contribute to the S-adenosyl-L-methionine site; that span reads LGDFVL.

The protein belongs to the RNA methyltransferase TrmD family. As to quaternary structure, homodimer.

It localises to the cytoplasm. The enzyme catalyses guanosine(37) in tRNA + S-adenosyl-L-methionine = N(1)-methylguanosine(37) in tRNA + S-adenosyl-L-homocysteine + H(+). Functionally, specifically methylates guanosine-37 in various tRNAs. The chain is tRNA (guanine-N(1)-)-methyltransferase from Streptococcus thermophilus (strain CNRZ 1066).